The primary structure comprises 865 residues: Leucine--tRNA ligase (865 aa).

The 'HIGH' region motif lies at 41-51 (PYPSGRIHMGH). The short motif at 614–618 (KMSKS) is the 'KMSKS' region element. Lysine 617 is an ATP binding site.

The protein belongs to the class-I aminoacyl-tRNA synthetase family.

It localises to the cytoplasm. It catalyses the reaction tRNA(Leu) + L-leucine + ATP = L-leucyl-tRNA(Leu) + AMP + diphosphate. The chain is Leucine--tRNA ligase from Rhodospirillum centenum (strain ATCC 51521 / SW).